The primary structure comprises 450 residues: tRNA modification GTPase MnmE (450 aa).

Residues R20, E78, and K117 each coordinate (6S)-5-formyl-5,6,7,8-tetrahydrofolate. In terms of domain architecture, TrmE-type G spans 211-372 (GLRMVIVGKP…LEESIYRETQ (162 aa)). N221 provides a ligand contact to K(+). Residues 221–226 (NVGKST), 240–246 (TDIPGTT), and 265–268 (DTAG) each bind GTP. Residue S225 participates in Mg(2+) binding. Residues T240, I242, and T245 each coordinate K(+). Residue T246 coordinates Mg(2+). K450 contacts (6S)-5-formyl-5,6,7,8-tetrahydrofolate.

Belongs to the TRAFAC class TrmE-Era-EngA-EngB-Septin-like GTPase superfamily. TrmE GTPase family. Homodimer. Heterotetramer of two MnmE and two MnmG subunits. Requires K(+) as cofactor.

It localises to the cytoplasm. Exhibits a very high intrinsic GTPase hydrolysis rate. Involved in the addition of a carboxymethylaminomethyl (cmnm) group at the wobble position (U34) of certain tRNAs, forming tRNA-cmnm(5)s(2)U34. The sequence is that of tRNA modification GTPase MnmE from Thermotoga sp. (strain RQ2).